Here is a 592-residue protein sequence, read N- to C-terminus: Arginine--tRNA ligase (592 aa).

Positions 128–138 match the 'HIGH' region motif; it reads ANPTGPLHVGH.

This sequence belongs to the class-I aminoacyl-tRNA synthetase family. Monomer.

The protein localises to the cytoplasm. It catalyses the reaction tRNA(Arg) + L-arginine + ATP = L-arginyl-tRNA(Arg) + AMP + diphosphate. The protein is Arginine--tRNA ligase of Hydrogenovibrio crunogenus (strain DSM 25203 / XCL-2) (Thiomicrospira crunogena).